The sequence spans 270 residues: MLLGSVPQLDRVAVQLGPFPVYWYGIIIGTGVLLGLWLATREGERLGIPKDTFVDLVLIAVPIAILFARMYYVIFEWEYYAQNPSQIINIRQGGLAIHGGLIGAVITGILFAKRRGVSFWKLADIAAPSILLGQAIGRWGNFMNQEAHGDEVTRQFLEGLHLPDFIINQMYIEGVYYHPTFLYESLWNFVGVILLLALRKVNLRRGELFFTYLIWYSVGRFFVEGLRTDSLMLGPLRIAQVMSIGLVVISIIFIIVRRKMGQADKRYSEN.

The next 4 helical transmembrane spans lie at 19–39, 56–76, 92–112, and 116–136; these read FPVYWYGIIIGTGVLLGLWLA, LVLIAVPIAILFARMYYVIFE, QGGLAIHGGLIGAVITGILFA, and GVSFWKLADIAAPSILLGQAI. Position 138 (R138) interacts with a 1,2-diacyl-sn-glycero-3-phospho-(1'-sn-glycerol). A run of 3 helical transmembrane segments spans residues 178–198, 206–226, and 236–256; these read HPTFLYESLWNFVGVILLLAL, GELFFTYLIWYSVGRFFVEGL, and LRIAQVMSIGLVVISIIFIIV.

It belongs to the Lgt family.

The protein localises to the cell membrane. The catalysed reaction is L-cysteinyl-[prolipoprotein] + a 1,2-diacyl-sn-glycero-3-phospho-(1'-sn-glycerol) = an S-1,2-diacyl-sn-glyceryl-L-cysteinyl-[prolipoprotein] + sn-glycerol 1-phosphate + H(+). It participates in protein modification; lipoprotein biosynthesis (diacylglyceryl transfer). Functionally, catalyzes the transfer of the diacylglyceryl group from phosphatidylglycerol to the sulfhydryl group of the N-terminal cysteine of a prolipoprotein, the first step in the formation of mature lipoproteins. This Bacillus cereus (strain G9842) protein is Phosphatidylglycerol--prolipoprotein diacylglyceryl transferase.